Consider the following 484-residue polypeptide: Legumin type B (484 aa).

An N-terminal signal peptide occupies residues 1-22; the sequence is MSKPFLSLLSLSLLLFTSTCLA. Disulfide bonds link Cys33-Cys66 and Cys109-Cys310. The Cupin type-1 1 domain maps to 38-257; it reads INALEPDHRV…TFNTEEDTAK (220 aa). Disordered stretches follow at residues 109-141, 196-236, and 275-304; these read CPQT…RFRK, PETQ…GNSV, and GLRI…GRNG. Residues 117 to 129 are compositionally biased toward low complexity; sequence RSSQSRQGSRQQQ. The segment covering 284 to 293 has biased composition (acidic residues); it reads QQEEEEEEEE. The 148-residue stretch at 316–463 folds into the Cupin type-1 2 domain; that stretch reads ENIAQPARAD…AFGLRQRQVT (148 aa).

Belongs to the 11S seed storage protein (globulins) family. As to quaternary structure, hexamer; each subunit is composed of an acidic and a basic chain derived from a single precursor and linked by a disulfide bond.

In terms of biological role, this protein found in the seeds of many leguminous and non-leguminous plants is the source of sulfur-containing amino acids in seed meals. This is Legumin type B (LEB4) from Vicia faba (Broad bean).